A 300-amino-acid chain; its full sequence is Phosphoribosylaminoimidazole-succinocarboxamide synthase (300 aa).

Belongs to the SAICAR synthetase family.

It carries out the reaction 5-amino-1-(5-phospho-D-ribosyl)imidazole-4-carboxylate + L-aspartate + ATP = (2S)-2-[5-amino-1-(5-phospho-beta-D-ribosyl)imidazole-4-carboxamido]succinate + ADP + phosphate + 2 H(+). It functions in the pathway purine metabolism; IMP biosynthesis via de novo pathway; 5-amino-1-(5-phospho-D-ribosyl)imidazole-4-carboxamide from 5-amino-1-(5-phospho-D-ribosyl)imidazole-4-carboxylate: step 1/2. This chain is Phosphoribosylaminoimidazole-succinocarboxamide synthase, found in Methylibium petroleiphilum (strain ATCC BAA-1232 / LMG 22953 / PM1).